Here is a 106-residue protein sequence, read N- to C-terminus: Transcriptional and immune response regulator (106 aa).

Monomer. Interacts with NOTCH2 (via ANK repeats), the interaction inhibits the nuclear translocation of NOTCH2 N2ICD. Interacts (C-terminus) with CBY1 (C-terminus), TCIM competes with CTNNB1 for the interaction with CBY1. As to expression, expressed in liver, expression levels decrease in regenerating liver. In bone marrow, expressed in large progenitor-like cells, cells with ring-shaped nuclei and, at lower, levels in hematopietic stem cell-like cells with round nuclei (at protein level).

It localises to the cytoplasm. The protein resides in the nucleus. Its subcellular location is the nucleolus. The protein localises to the nucleus speckle. Its function is as follows. Seems to be involved in the regulation of cell growth an differentiation, may play different and opposite roles depending on the tissue or cell type. May enhance the WNT-CTNNB1 pathway by relieving antagonistic activity of CBY1. Enhances the proliferation of follicular dendritic cells. Plays a role in the mitogen-activated MAPK2/3 signaling pathway, positively regulates G1-to-S-phase transition of the cell cycle. In endothelial cells, enhances key inflammatory mediators and inflammatory response through the modulation of NF-kappaB transcriptional regulatory activity. Involved in the regulation of heat shock response, seems to play a positive feedback with HSF1 to modulate heat-shock downstream gene expression. Plays a role in the regulation of hematopoiesis even if the mechanisms are unknown. In cancers such as thyroid or lung cancer, it has been described as promoter of cell proliferation, G1-to-S-phase transition and inhibitor of apoptosis. However, it negatively regulates self-renewal of liver cancer cells via suppresion of NOTCH2 signaling. The protein is Transcriptional and immune response regulator of Mus musculus (Mouse).